We begin with the raw amino-acid sequence, 153 residues long: Flagellar assembly factor FliW (153 aa).

The protein belongs to the FliW family. In terms of assembly, interacts with translational regulator CsrA and flagellin(s).

Its subcellular location is the cytoplasm. Acts as an anti-CsrA protein, binds CsrA and prevents it from repressing translation of its target genes, one of which is flagellin. Binds to flagellin and participates in the assembly of the flagellum. This Heliobacterium modesticaldum (strain ATCC 51547 / Ice1) protein is Flagellar assembly factor FliW.